We begin with the raw amino-acid sequence, 252 residues long: 3-dehydroquinate dehydratase (252 aa).

3-dehydroquinate contacts are provided by residues 47 to 49 (EWR) and Arg-83. Catalysis depends on His-144, which acts as the Proton donor/acceptor. The active-site Schiff-base intermediate with substrate is Lys-171. Arg-213, Ser-232, and Gln-236 together coordinate 3-dehydroquinate.

It belongs to the type-I 3-dehydroquinase family. In terms of assembly, homodimer.

The catalysed reaction is 3-dehydroquinate = 3-dehydroshikimate + H2O. Its pathway is metabolic intermediate biosynthesis; chorismate biosynthesis; chorismate from D-erythrose 4-phosphate and phosphoenolpyruvate: step 3/7. Functionally, involved in the third step of the chorismate pathway, which leads to the biosynthesis of aromatic amino acids. Catalyzes the cis-dehydration of 3-dehydroquinate (DHQ) and introduces the first double bond of the aromatic ring to yield 3-dehydroshikimate. In Lactiplantibacillus plantarum (strain ATCC BAA-793 / NCIMB 8826 / WCFS1) (Lactobacillus plantarum), this protein is 3-dehydroquinate dehydratase.